A 350-amino-acid polypeptide reads, in one-letter code: Adenine deaminase (350 aa).

Zn(2+) contacts are provided by H24, H26, and H207. E210 (proton donor) is an active-site residue. Residue D288 coordinates Zn(2+). D289 is a binding site for substrate.

Belongs to the metallo-dependent hydrolases superfamily. Adenosine and AMP deaminases family. Adenine deaminase type 2 subfamily. It depends on Zn(2+) as a cofactor.

The catalysed reaction is adenine + H2O + H(+) = hypoxanthine + NH4(+). In terms of biological role, catalyzes the hydrolytic deamination of adenine to hypoxanthine. Plays an important role in the purine salvage pathway and in nitrogen catabolism. In Paraburkholderia phytofirmans (strain DSM 17436 / LMG 22146 / PsJN) (Burkholderia phytofirmans), this protein is Adenine deaminase.